The primary structure comprises 374 residues: Cell division protein DivIB (374 aa).

Positions 1-90 (MWKISNENDI…EEEHFADRLP (90 aa)) are disordered. Topologically, residues 1 to 103 (MWKISNENDI…KTRNKRLYRR (103 aa)) are cytoplasmic. Basic and acidic residues predominate over residues 39-53 (YLKKQAEEAASKGEN). Polar residues predominate over residues 56 to 75 (AEVTITLQEQSQEEPQQHLP). A helical transmembrane segment spans residues 104-124 (LAFILTCLGTAILVALYFVSP). The Extracellular portion of the chain corresponds to 125–374 (LSRLSEVTVS…GENQEVQQAE (250 aa)). One can recognise a POTRA domain in the interval 126 to 197 (SRLSEVTVSG…NSFKIDIQEY (72 aa)). The segment at 325–374 (KESEETGSEVSEDSAVENQEVVDPNAGVATDEANNGTPTNGENQEVQQAE) is disordered. The segment covering 326 to 339 (ESEETGSEVSEDSA) has biased composition (acidic residues). The span at 356–374 (EANNGTPTNGENQEVQQAE) shows a compositional bias: polar residues.

The protein belongs to the FtsQ/DivIB family. DivIB subfamily.

Its subcellular location is the cell membrane. In terms of biological role, cell division protein that may be involved in stabilizing or promoting the assembly of the division complex. This is Cell division protein DivIB from Enterococcus faecalis (strain ATCC 700802 / V583).